A 346-amino-acid polypeptide reads, in one-letter code: NADH-ubiquinone oxidoreductase chain 2 (346 aa).

The next 11 helical transmembrane spans lie at 1–21, 25–45, 60–80, 95–115, 124–144, 149–169, 178–195, 200–219, 242–262, 274–294, and 326–346; these read MNPHATPVLVLSLALGTTITI, HWVLAWTGLEINTLAIIPLIS, FLTQAAASALVLFSSMTNAWA, CLLLTAAIAIKLGLVPFHFWF, LMTALLLSTLMKFPPLTLLLM, LNPALLTTMALASAALGGWMG, ILAFSSISHLGWIAIILV, LALLTFYLYTIMTSAVFMAL, ATLMLMLLSLAGLPPLTGFMP, EMTPAAMAIAMLSLLSLFFYL, and AILASLSILLLPLSPMVHAIV.

This sequence belongs to the complex I subunit 2 family.

It is found in the mitochondrion inner membrane. It catalyses the reaction a ubiquinone + NADH + 5 H(+)(in) = a ubiquinol + NAD(+) + 4 H(+)(out). In terms of biological role, core subunit of the mitochondrial membrane respiratory chain NADH dehydrogenase (Complex I) that is believed to belong to the minimal assembly required for catalysis. Complex I functions in the transfer of electrons from NADH to the respiratory chain. The immediate electron acceptor for the enzyme is believed to be ubiquinone. In Mareca penelope (Eurasian wigeon), this protein is NADH-ubiquinone oxidoreductase chain 2 (MT-ND2).